The chain runs to 225 residues: Cyanamide hydratase DDI2 (225 aa).

The HD domain maps to 52 to 162 (VLNHSLRVFQ…LQIATTLDNV (111 aa)).

The protein belongs to the cyanamide dehydrase family. As to quaternary structure, homohexamer. It depends on Zn(2+) as a cofactor.

The catalysed reaction is urea = cyanamide + H2O. In terms of biological role, cyanamide hydratase involved in the detoxification and/or utilization of cyanamide, a toxic nitrile compound distributed widely in the environment. In Saccharomyces cerevisiae (strain ATCC 204508 / S288c) (Baker's yeast), this protein is Cyanamide hydratase DDI2.